Here is a 492-residue protein sequence, read N- to C-terminus: MKTNYLILGVSTLISKNVGHISQIIGPVLDVTFPPGKMPNIYNSLIVRGQNPAGQEINVTCEVQQLLGNNKVRAVAMSATDGLTRGMKVTDTGAPLSVPVGEVTLGRIFNVLGEPVDNLGAIDVSTTFPIHRSAPAFTQLDTKLSIFETGIKVVDLLAPYRRGGKIGLFGGAGVGKTVLIMELINNIAKAHGGVSVFGGVGERTREGNDLYMEMKESKVINEQDISESKVALVYGQMNEPPGARMRVGLTALTMAEYFRDVNKQDVLLFIDNIFRFVQAGSEVSALLGRMPSAVGYQPTLSTEMGSLQERITSTKEGSITSIQAVYVPADDLTDPAPATTFAHLDATTVLSRGLAAKGIYPAVDPLDSTSTMLQPWIVGEEHYETAQGVKQTLQRYKELQDIIAILGLDELSEEDRLTVARARKIERFLSQPFFVAEVFTGSPGKYVSLIETIKGFQMILAGELDGLPEQAFYLVGNIDEVTAKAETLQMES.

170 to 177 (GGAGVGKT) contributes to the ATP binding site.

Belongs to the ATPase alpha/beta chains family. In terms of assembly, F-type ATPases have 2 components, CF(1) - the catalytic core - and CF(0) - the membrane proton channel. CF(1) has five subunits: alpha(3), beta(3), gamma(1), delta(1), epsilon(1). CF(0) has four main subunits: a(1), b(1), b'(1) and c(9-12).

It is found in the plastid. The protein localises to the chloroplast thylakoid membrane. It carries out the reaction ATP + H2O + 4 H(+)(in) = ADP + phosphate + 5 H(+)(out). Functionally, produces ATP from ADP in the presence of a proton gradient across the membrane. The catalytic sites are hosted primarily by the beta subunits. This chain is ATP synthase subunit beta, chloroplastic, found in Anthoceros angustus (Hornwort).